The primary structure comprises 512 residues: Cytochrome P450 82C3 (512 aa).

A helical transmembrane segment spans residues 1-21 (MDTSLFSLFVSILVFVFIALF). Cys451 contacts heme.

The protein belongs to the cytochrome P450 family. Heme is required as a cofactor.

The protein resides in the membrane. The protein is Cytochrome P450 82C3 (CYP82C3) of Arabidopsis thaliana (Mouse-ear cress).